Here is a 72-residue protein sequence, read N- to C-terminus: Large ribosomal subunit protein bL31 (72 aa).

Zn(2+)-binding residues include cysteine 17, cysteine 19, cysteine 37, and cysteine 40.

Belongs to the bacterial ribosomal protein bL31 family. Type A subfamily. As to quaternary structure, part of the 50S ribosomal subunit. Requires Zn(2+) as cofactor.

Functionally, binds the 23S rRNA. The protein is Large ribosomal subunit protein bL31 of Clostridium botulinum (strain ATCC 19397 / Type A).